Consider the following 1019-residue polypeptide: Sca1 complex protein phr (1019 aa).

Disordered regions lie at residues 89–118 (IVINSSSSSSSSSSHHPHHQKTPSNSSSNF), 131–202 (AFNN…INNN), 265–287 (QQLNQNGGSNNGSTSNSTSNSAN), and 512–546 (STNNNNSGNNSNNNNGNSNGNSSNNNSNNNSTNNL). Residues 93-102 (SSSSSSSSSS) are compositionally biased toward low complexity. Residues 141–155 (NRKEKEKDKDKDHQD) show a composition bias toward basic and acidic residues. A coiled-coil region spans residues 158–188 (NINNINNINNNINNNINNNNNNNNNNNNNNN). The span at 158–202 (NINNINNINNNINNNINNNNNNNNNNNNNNNMHNPTSSSPSINNN) shows a compositional bias: low complexity. The PH domain maps to 735-836 (EIKKKGYLFK…WIKAIKFNCF (102 aa)). Low complexity predominate over residues 860-872 (VAGSGSNNGNNNG). Disordered stretches follow at residues 860 to 890 (VAGSGSNNGNNNGHLKRSDTTQQLNNSGSFI), 904 to 951 (NLSI…QQQL), and 977 to 1019 (SSYT…SKLK). Polar residues predominate over residues 879–890 (TTQQLNNSGSFI). Residues 977 to 986 (SSYTDSMSGS) are compositionally biased toward low complexity. Polar residues predominate over residues 987–1019 (PPDSNGQVFPQSPQLKKTLFQRTTSFSKGSKLK).

As to quaternary structure, component of the Sca1 complex composed of at least gefA, gefH, scaA, phr, and the protein phosphatase 2A subunits pppA and pho2B. Interacts directly with gefH.

Its subcellular location is the cell membrane. Component of the Sca1 complex, a regulator of cell motility, chemotaxis and signal relay. The Sca1 complex is recruited to the plasma membrane in a chemoattractant- and F-actin-dependent manner and is enriched at the leading edge of chemotaxing cells where it regulates F-actin dynamics and signal relay by controlling the activation of rasC and the downstream target of rapamycin complex 2 (TORC2)-Akt/protein kinase B (PKB) pathway. This is Sca1 complex protein phr from Dictyostelium discoideum (Social amoeba).